We begin with the raw amino-acid sequence, 215 residues long: HTH-type transcriptional regulator AcrR (215 aa).

The 61-residue stretch at 10–70 folds into the HTH tetR-type domain; the sequence is QETRQHILDV…EIWELSESNI (61 aa). Residues 33-52 constitute a DNA-binding region (H-T-H motif); sequence SLGEIAKAAGVTRGAIYWHF.

Functionally, potential regulator protein for the acrAB genes. The protein is HTH-type transcriptional regulator AcrR (acrR) of Shigella flexneri.